Here is a 389-residue protein sequence, read N- to C-terminus: Chaperone protein DnaJ (389 aa).

Positions 6-70 constitute a J domain; that stretch reads DYYEILGLSK…EKRAQYDRFG (65 aa). The CR-type zinc finger occupies 131-213; that stretch reads GVRKDIDIPR…CSGAGRVRSR (83 aa). Cys144, Cys147, Cys161, Cys164, Cys187, Cys190, Cys201, and Cys204 together coordinate Zn(2+). CXXCXGXG motif repeat units lie at residues 144 to 151, 161 to 168, 187 to 194, and 201 to 208; these read CSTCSGTG, CPNCGGTG, CSACHGRG, and CPTCSGAG. Residues 145–167 are disordered; sequence STCSGTGAKPGTSPKRCPNCGGT. The interval 351–389 is disordered; that stretch reads LSNGKKPEAEERSRSDKQKSEKPRKSKGLFEKVKDAFES. Basic and acidic residues predominate over residues 355 to 389; sequence KKPEAEERSRSDKQKSEKPRKSKGLFEKVKDAFES.

This sequence belongs to the DnaJ family. In terms of assembly, homodimer. Zn(2+) serves as cofactor.

The protein resides in the cytoplasm. Participates actively in the response to hyperosmotic and heat shock by preventing the aggregation of stress-denatured proteins and by disaggregating proteins, also in an autonomous, DnaK-independent fashion. Unfolded proteins bind initially to DnaJ; upon interaction with the DnaJ-bound protein, DnaK hydrolyzes its bound ATP, resulting in the formation of a stable complex. GrpE releases ADP from DnaK; ATP binding to DnaK triggers the release of the substrate protein, thus completing the reaction cycle. Several rounds of ATP-dependent interactions between DnaJ, DnaK and GrpE are required for fully efficient folding. Also involved, together with DnaK and GrpE, in the DNA replication of plasmids through activation of initiation proteins. This Methanosarcina mazei (strain ATCC BAA-159 / DSM 3647 / Goe1 / Go1 / JCM 11833 / OCM 88) (Methanosarcina frisia) protein is Chaperone protein DnaJ.